Here is a 186-residue protein sequence, read N- to C-terminus: TATA-box-binding protein D (186 aa).

2 repeat units span residues 10-86 (IENV…VEDL) and 101-179 (VQNI…HERL).

Belongs to the TBP family.

Functionally, general factor that plays a role in the activation of archaeal genes transcribed by RNA polymerase. Binds specifically to the TATA box promoter element which lies close to the position of transcription initiation. This is TATA-box-binding protein D (tbpD) from Halobacterium salinarum (strain ATCC 700922 / JCM 11081 / NRC-1) (Halobacterium halobium).